The sequence spans 55 residues: Lantibiotic epilancin 15X (55 aa).

The propeptide at 1–24 is cleaved by ElxP; it reads MKKELFDLNLNKDIEAQKSDLNPQ. Ser25 bears the D-lactate; by the dehydratase ElxB and the dehydrogenase ElxO mark. 2,3-didehydroalanine (Ser); by the dehydratase ElxB is present on Ser27. Residues Thr31 and Thr32 each carry the 2,3-didehydrobutyrine; by the dehydratase ElxB modification. The lanthionine (Ser-Cys); by the dehydratase ElxB and the cyclase ElxC cross-link spans 36 to 40; it reads SKKLC. Cross-links (beta-methyllanthionine (Thr-Cys); by the dehydratase ElxB and the cyclase ElxC) lie at residues 44–47 and 46–49; these read TLTC and TCGC. Position 52 is a 2,3-didehydrobutyrine; by the dehydratase ElxB (Thr52).

In terms of processing, maturation of this lantibiotic involves the enzymatic conversion of Thr, and Ser into dehydrated AA by ElxB and the formation of thioether bonds with cysteine by the cyclase ElxC. The next steps are cleavage of the leader peptide by ElxP and membrane translocation by ElxT. The leader peptide may be removed before membrane translocation, in contrast to other lantibiotics for which the cleavage occur after translocation. This is suggested by the probable cytoplasmic localization of the serine protease ElxP that cleaves the leader peptide. Post-translationally, the N-terminal D-lactate is probably produced by dehydration of Ser-25 by ElxB, followed by proteolytic removal of the leader peptide by the serine protease ElxP and hydrolysis of the resulting new N-terminal dehydroalanine. This hydrolysis may occur spontaneously. The pyruvate group thus formed is reduced to D-lactate by the NADPH-dependent oxidoreductase ElxO. This N-terminal D-lactate protects the lantibiotic against degradation against aminopeptidase. It is not established whether the 2,3-didehydrobutyrines are the E- or Z-isomers.

Functionally, lanthionine-containing peptide antibiotic (lantibiotic) active on Gram-positive bacteria such as staphylococci, enterococci and streptococci. The bactericidal activity of lantibiotics is based on depolarization of energized bacterial cytoplasmic membranes, initiated by the formation of aqueous transmembrane pores. This chain is Lantibiotic epilancin 15X, found in Staphylococcus epidermidis.